The chain runs to 53 residues: U1-poneritoxin-Dq5a (53 aa).

The first 23 residues, Met1–Asn23, serve as a signal peptide directing secretion. Disulfide bonds link Cys25–Cys42, Cys32–Cys47, and Cys41–Cys52.

Expressed by the venom gland.

It localises to the secreted. Functionally, may have neurotoxic activity. This is U1-poneritoxin-Dq5a from Dinoponera quadriceps (South American ant).